The following is a 573-amino-acid chain: Arylsulfatase I (573 aa).

The first 23 residues, 1 to 23 (MHALTGLSLVSLLSFGYLSWDWA), serve as a signal peptide directing secretion. Ca(2+) contacts are provided by aspartate 56, aspartate 57, and cysteine 94. Cysteine 94 functions as the Nucleophile in the catalytic mechanism. Cysteine 94 bears the 3-oxoalanine (Cys) mark. Lysine 148 lines the substrate pocket. Histidine 150 is an active-site residue. Histidine 240 contacts substrate. N-linked (GlcNAc...) asparagine glycans are attached at residues asparagine 277 and asparagine 289. Ca(2+)-binding residues include aspartate 298 and asparagine 299. Substrate is bound at residue lysine 316. 2 N-linked (GlcNAc...) asparagine glycosylation sites follow: asparagine 467 and asparagine 497. The segment at 516–550 (FNGGAWGPWASDEEEEEEEEEAGRARSFSRGRRKK) is disordered. A compositionally biased stretch (acidic residues) spans 526-536 (SDEEEEEEEEE).

It belongs to the sulfatase family. It depends on Ca(2+) as a cofactor. Post-translationally, the oxidation of Cys-94 residue to 3-oxoalanine (also known as C(alpha)-formylglycine) by SUMF1/Sulfatase-modifying factor 1, seems critical for catalytic activity.

The protein localises to the secreted. It is found in the endoplasmic reticulum. Functionally, displays arylsulfatase activity at neutral pH, when co-expressed with SUMF1; arylsulfatase activity is measured in the secretion medium of retinal cell line, but no activity is recorded when measured in cell extracts. In Canis lupus familiaris (Dog), this protein is Arylsulfatase I (ARSI).